Consider the following 453-residue polypeptide: Ribose 1,5-bisphosphate phosphokinase PhnN (453 aa).

The interval Met1 to Leu21 is disordered. Residues Met1 to Pro271 are unknown. The segment at His272–Lys453 is ribose 1,5-bisphosphokinase.

It in the C-terminal section; belongs to the ribose 1,5-bisphosphokinase family.

The enzyme catalyses alpha-D-ribose 1,5-bisphosphate + ATP = 5-phospho-alpha-D-ribose 1-diphosphate + ADP. It participates in metabolic intermediate biosynthesis; 5-phospho-alpha-D-ribose 1-diphosphate biosynthesis; 5-phospho-alpha-D-ribose 1-diphosphate from D-ribose 5-phosphate (route II): step 3/3. Functionally, catalyzes the phosphorylation of ribose 1,5-bisphosphate to 5-phospho-D-ribosyl alpha-1-diphosphate (PRPP). This Janthinobacterium sp. (strain Marseille) (Minibacterium massiliensis) protein is Ribose 1,5-bisphosphate phosphokinase PhnN (phnN).